Reading from the N-terminus, the 474-residue chain is Aspartyl/glutamyl-tRNA(Asn/Gln) amidotransferase subunit B (474 aa).

The protein belongs to the GatB/GatE family. GatB subfamily. As to quaternary structure, heterotrimer of A, B and C subunits.

It carries out the reaction L-glutamyl-tRNA(Gln) + L-glutamine + ATP + H2O = L-glutaminyl-tRNA(Gln) + L-glutamate + ADP + phosphate + H(+). It catalyses the reaction L-aspartyl-tRNA(Asn) + L-glutamine + ATP + H2O = L-asparaginyl-tRNA(Asn) + L-glutamate + ADP + phosphate + 2 H(+). In terms of biological role, allows the formation of correctly charged Asn-tRNA(Asn) or Gln-tRNA(Gln) through the transamidation of misacylated Asp-tRNA(Asn) or Glu-tRNA(Gln) in organisms which lack either or both of asparaginyl-tRNA or glutaminyl-tRNA synthetases. The reaction takes place in the presence of glutamine and ATP through an activated phospho-Asp-tRNA(Asn) or phospho-Glu-tRNA(Gln). The sequence is that of Aspartyl/glutamyl-tRNA(Asn/Gln) amidotransferase subunit B from Campylobacter curvus (strain 525.92).